Consider the following 615-residue polypeptide: Nuclear receptor subfamily 1 group D member 1 (615 aa).

Residues 1–12 (MTTLDSNNNTGG) are compositionally biased toward polar residues. A required for phosphorylation by CSNK1E and cytoplasmic localization region spans residues 1-70 (MTTLDSNNNT…TQDPARSFGT (70 aa)). The tract at residues 1–120 (MTTLDSNNNT…SSRVSPSKGT (120 aa)) is disordered. Residues 1 to 129 (MTTLDSNNNT…TSNITKLNGM (129 aa)) form a modulating region. The span at 14–34 (ITYIGSSGSSPSRTSPESLYS) shows a compositional bias: low complexity. Residues 35–48 (DSSNGSFQSLTQGC) are compositionally biased toward polar residues. The segment at 49–285 (PTYFPPSPTG…PPRSPSPEPT (237 aa)) is crucial for activation of GJA1. A phosphoserine; by GSK3-beta mark is found at serine 55 and serine 59. The span at 72–103 (PPSLSDDSSPSSASSSSSSSSSSFYNGSPPGS) shows a compositional bias: low complexity. The segment at residues 130–206 (VLLCKVCGDV…VGMSRDAVRF (77 aa)) is a DNA-binding region (nuclear receptor). 2 consecutive NR C4-type zinc fingers follow at residues 133-153 (CKVC…CEGC) and 170-194 (CLKN…FKKC). 2 positions are modified to N6-acetyllysine; by KAT5: lysine 192 and lysine 193. 3 disordered regions span residues 235 to 287 (LCPL…PTVE), 312 to 337 (PGNF…SQGC), and 357 to 385 (NGLR…PNSN). A compositionally biased stretch (pro residues) spans 253–262 (PSPPPAPAPT). Threonine 275 is subject to Phosphothreonine; by CDK1. Residues 285-615 (TVEDVISQVA…KLLSFRVDAQ (331 aa)) enclose the NR LBD domain. Lysine 401 bears the N6-acetyllysine mark. Cysteine 419 is a binding site for heme. Lysine 592 is modified (N6-acetyllysine). Residue histidine 603 participates in heme binding.

It belongs to the nuclear hormone receptor family. NR1 subfamily. Binds DNA as a monomer or a homodimer. Interacts with C1D, NR2E3, SP1 and ZNHIT1. Interacts with OPHN1 (via C-terminus). Interacts with PER2; the interaction associates PER2 to BMAL1 promoter region. Interacts with CRY1. Interacts with CCAR2. Interacts with SIAH2. Interacts with FBXW7 and CDK1. Interacts with HUWE1. Interacts with NR0B2. Interacts with NFIL3. Interacts (via domain NR LBD) with HSP90AA1 and HSP90AB1. Post-translationally, ubiquitinated, leading to its proteasomal degradation. Ubiquitinated by the SCF(FBXW7) complex when phosphorylated by CDK1 leading to its proteasomal degradation. Ubiquitinated by SIAH2; leading to its proteasomal degradation. Rapidly ubiquitinated in response to inflammatory triggers and sumoylation is a prerequisite to its ubiquitination. In terms of processing, sumoylated by UBE2I, desumoylated by SENP1, and sumoylation is a prerequisite to its ubiquitination. Phosphorylated by CSNK1E; phosphorylation enhances its cytoplasmic localization. Post-translationally, undergoes lysosome-mediated degradation in a time-dependent manner in the liver.

Its subcellular location is the nucleus. It is found in the cytoplasm. The protein localises to the cell projection. It localises to the dendrite. The protein resides in the dendritic spine. In terms of biological role, transcriptional repressor which coordinates circadian rhythm and metabolic pathways in a heme-dependent manner. Integral component of the complex transcription machinery that governs circadian rhythmicity and forms a critical negative limb of the circadian clock by directly repressing the expression of core clock components BMAL1, CLOCK and CRY1. Also regulates genes involved in metabolic functions, including lipid and bile acid metabolism, adipogenesis, gluconeogenesis and the macrophage inflammatory response. Acts as a receptor for heme which stimulates its interaction with the NCOR1/HDAC3 corepressor complex, enhancing transcriptional repression. Recognizes two classes of DNA response elements within the promoter of its target genes and can bind to DNA as either monomers or homodimers, depending on the nature of the response element. Binds as a monomer to a response element composed of the consensus half-site motif 5'-[A/G]GGTCA-3' preceded by an A/T-rich 5' sequence (RevRE), or as a homodimer to a direct repeat of the core motif spaced by two nucleotides (RevDR-2). Acts as a potent competitive repressor of ROR alpha (RORA) function and regulates the levels of its ligand heme by repressing the expression of PPARGC1A, a potent inducer of heme synthesis. Regulates lipid metabolism by repressing the expression of APOC3 and by influencing the activity of sterol response element binding proteins (SREBPs); represses INSIG2 which interferes with the proteolytic activation of SREBPs which in turn govern the rhythmic expression of enzymes with key functions in sterol and fatty acid synthesis. Regulates gluconeogenesis via repression of G6PC1 and PEPCK and adipocyte differentiation via repression of PPARG. Regulates glucagon release in pancreatic alpha-cells via the AMPK-NAMPT-SIRT1 pathway and the proliferation, glucose-induced insulin secretion and expression of key lipogenic genes in pancreatic-beta cells. Positively regulates bile acid synthesis by increasing hepatic expression of CYP7A1 via repression of NR0B2 and NFIL3 which are negative regulators of CYP7A1. Modulates skeletal muscle oxidative capacity by regulating mitochondrial biogenesis and autophagy; controls mitochondrial biogenesis and respiration by interfering with the STK11-PRKAA1/2-SIRT1-PPARGC1A signaling pathway. Represses the expression of SERPINE1/PAI1, an important modulator of cardiovascular disease and the expression of inflammatory cytokines and chemokines in macrophages. Represses gene expression at a distance in macrophages by inhibiting the transcription of enhancer-derived RNAs (eRNAs). Plays a role in the circadian regulation of body temperature and negatively regulates thermogenic transcriptional programs in brown adipose tissue (BAT); imposes a circadian oscillation in BAT activity, increasing body temperature when awake and depressing thermogenesis during sleep. In concert with NR2E3, regulates transcriptional networks critical for photoreceptor development and function. In addition to its activity as a repressor, can also act as a transcriptional activator. In the ovarian granulosa cells acts as a transcriptional activator of STAR which plays a role in steroid biosynthesis. In collaboration with SP1, activates GJA1 transcription in a heme-independent manner. Represses the transcription of CYP2B10, CYP4A10 and CYP4A14. Represses the transcription of CES2. Represses and regulates the circadian expression of TSHB in a NCOR1-dependent manner. Negatively regulates the protein stability of NR3C1 and influences the time-dependent subcellular distribution of NR3C1, thereby affecting its transcriptional regulatory activity. Plays a critical role in the circadian control of neutrophilic inflammation in the lung; under resting, non-stress conditions, acts as a rhythmic repressor to limit inflammatory activity whereas in the presence of inflammatory triggers undergoes ubiquitin-mediated degradation thereby relieving inhibition of the inflammatory response. Plays a key role in the circadian regulation of microglial activation and neuroinflammation; suppresses microglial activation through the NF-kappaB pathway in the central nervous system. Plays a role in the regulation of the diurnal rhythms of lipid and protein metabolism in the skeletal muscle via transcriptional repression of genes controlling lipid and amino acid metabolism in the muscle. In Rattus norvegicus (Rat), this protein is Nuclear receptor subfamily 1 group D member 1 (Nr1d1).